Here is a 324-residue protein sequence, read N- to C-terminus: Holliday junction branch migration complex subunit RuvB (324 aa).

A large ATPase domain (RuvB-L) region spans residues 1 to 168; it reads MEDLALRPKT…FGIVEHLEYY (168 aa). Residues L6, R7, G48, K51, T52, T53, 115–117, R158, Y168, and R205 each bind ATP; that span reads EDF. Residue T52 coordinates Mg(2+). The segment at 169-239 is small ATPAse domain (RuvB-S); sequence TPEELAQGVM…RALEALAALG (71 aa). The head domain (RuvB-H) stretch occupies residues 242–324; it reads ELGLEKRDRE…PPPVGPLLEP (83 aa). Residues R297 and R302 each coordinate DNA.

Belongs to the RuvB family. In terms of assembly, homohexamer. Forms an RuvA(8)-RuvB(12)-Holliday junction (HJ) complex. HJ DNA is sandwiched between 2 RuvA tetramers; dsDNA enters through RuvA and exits via RuvB. An RuvB hexamer assembles on each DNA strand where it exits the tetramer. Each RuvB hexamer is contacted by two RuvA subunits (via domain III) on 2 adjacent RuvB subunits; this complex drives branch migration. In the full resolvosome a probable DNA-RuvA(4)-RuvB(12)-RuvC(2) complex forms which resolves the HJ.

It localises to the cytoplasm. The catalysed reaction is ATP + H2O = ADP + phosphate + H(+). The ATPase activity of RuvB is enhanced by RuvA. In terms of biological role, the RuvA-RuvB-RuvC complex processes Holliday junction (HJ) DNA during genetic recombination and DNA repair, while the RuvA-RuvB complex plays an important role in the rescue of blocked DNA replication forks via replication fork reversal (RFR). RuvA specifically binds to HJ cruciform DNA, conferring on it an open structure. The RuvB hexamer acts as an ATP-dependent pump, pulling dsDNA into and through the RuvAB complex. RuvB forms 2 homohexamers on either side of HJ DNA bound by 1 or 2 RuvA tetramers; 4 subunits per hexamer contact DNA at a time. Coordinated motions by a converter formed by DNA-disengaged RuvB subunits stimulates ATP hydrolysis and nucleotide exchange. Immobilization of the converter enables RuvB to convert the ATP-contained energy into a lever motion, pulling 2 nucleotides of DNA out of the RuvA tetramer per ATP hydrolyzed, thus driving DNA branch migration. The RuvB motors rotate together with the DNA substrate, which together with the progressing nucleotide cycle form the mechanistic basis for DNA recombination by continuous HJ branch migration. Branch migration allows RuvC to scan DNA until it finds its consensus sequence, where it cleaves and resolves cruciform DNA. Has Mg(2+)-, DNA-dependent ATPase activity; dsDNA and supercoiled DNA but not ssDNA stimulate activity. Binds to linear dsDNA in the absence of ATP or ATP-gamma-S. This subunit can promote Holliday junction migration alone in vitro. Partially complements an E.coli deletion for UV sensitivity. This Thermus thermophilus protein is Holliday junction branch migration complex subunit RuvB.